The chain runs to 247 residues: uncharacterized protein (247 aa).

NAD(+)-binding residues include leucine 19, aspartate 38, aspartate 63, and valine 64. Serine 142 contacts substrate. 3 residues coordinate NAD(+): tyrosine 155, lysine 159, and serine 190. The Proton acceptor role is filled by tyrosine 155.

It belongs to the short-chain dehydrogenases/reductases (SDR) family.

This is an uncharacterized protein from Mycobacterium bovis (strain ATCC BAA-935 / AF2122/97).